The following is a 159-amino-acid chain: Putative pre-16S rRNA nuclease (159 aa).

It belongs to the YqgF nuclease family.

The protein localises to the cytoplasm. Could be a nuclease involved in processing of the 5'-end of pre-16S rRNA. This Bartonella quintana (strain Toulouse) (Rochalimaea quintana) protein is Putative pre-16S rRNA nuclease.